Reading from the N-terminus, the 98-residue chain is NADH-ubiquinone oxidoreductase chain 4L (98 aa).

3 helical membrane-spanning segments follow: residues 1-21 (MLAINLNLTVAFMLALTGVLV), 25-45 (HLMSTLLCLEGMMLSLFILMT), and 57-79 (SMAPLILLVFSACEAGVGLALLV).

This sequence belongs to the complex I subunit 4L family. In terms of assembly, core subunit of respiratory chain NADH dehydrogenase (Complex I) which is composed of 45 different subunits.

The protein resides in the mitochondrion inner membrane. The catalysed reaction is a ubiquinone + NADH + 5 H(+)(in) = a ubiquinol + NAD(+) + 4 H(+)(out). In terms of biological role, core subunit of the mitochondrial membrane respiratory chain NADH dehydrogenase (Complex I) which catalyzes electron transfer from NADH through the respiratory chain, using ubiquinone as an electron acceptor. Part of the enzyme membrane arm which is embedded in the lipid bilayer and involved in proton translocation. In Dasyurus hallucatus (Northern quoll), this protein is NADH-ubiquinone oxidoreductase chain 4L (MT-ND4L).